The chain runs to 100 residues: Cell division protein DrpB (100 aa).

At 1 to 16 the chain is on the cytoplasmic side; it reads MEYGSTKMEERLSRSP. A helical transmembrane segment spans residues 17–37; the sequence is GGKLALWAFYTWCGYFVWAMA. The Periplasmic portion of the chain corresponds to 38-64; sequence RYIWVMSRIPDAPVSGFESDLGSTAGK. The helical transmembrane segment at 65-85 threads the bilayer; that stretch reads WLGALVGFLFMALVGALLGSI. The Cytoplasmic portion of the chain corresponds to 86–100; it reads AWYTRPRPARSRRYE.

Belongs to the DrpB family. In terms of assembly, bacterial adenylate cyclase hybrid (BACTH) studies show interaction of this protein with DamX, FtsI, FtsN, FtsQ, YmgF, DedD, FtsA and MalF, as well as weaker interactions with DedD, MalG and PBP2, but this assay often generates false positive results.

Its subcellular location is the cell inner membrane. Its function is as follows. A non-essential division protein that localizes to the septal ring in low ionic strength medium. Localizes to the septal ring in about 30% of observed cells before cell constriction occurs; localization occurs in low ionic strength medium (0 NaCl) and requires FtsZ but not FtsEX. Overexpression partially restores correct FtsI localization to the division septum in an ftsEX deletion. Isolated as a multicopy suppressor of an ftsEX deletion mutant; it does not suppress other cell division defects (e.g. ftsA, ftsI, ftsQ or ftsZ). The sequence is that of Cell division protein DrpB from Escherichia coli (strain K12).